Reading from the N-terminus, the 371-residue chain is Chaperone protein DnaJ (371 aa).

The J domain occupies 5-69 (EFYDRLGVSK…QKRAAYDQYG (65 aa)). Residues 127–209 (GAEKEVSYNR…CHGTGHEKKT (83 aa)) form a CR-type zinc finger. Cysteine 140, cysteine 143, cysteine 157, cysteine 160, cysteine 183, cysteine 186, cysteine 197, and cysteine 200 together coordinate Zn(2+). CXXCXGXG motif repeat units lie at residues 140–147 (CHTCSGSG), 157–164 (CQKCHGSG), 183–190 (CDVCQGSG), and 197–204 (CPTCHGTG).

It belongs to the DnaJ family. In terms of assembly, homodimer. Zn(2+) serves as cofactor.

The protein localises to the cytoplasm. Participates actively in the response to hyperosmotic and heat shock by preventing the aggregation of stress-denatured proteins and by disaggregating proteins, also in an autonomous, DnaK-independent fashion. Unfolded proteins bind initially to DnaJ; upon interaction with the DnaJ-bound protein, DnaK hydrolyzes its bound ATP, resulting in the formation of a stable complex. GrpE releases ADP from DnaK; ATP binding to DnaK triggers the release of the substrate protein, thus completing the reaction cycle. Several rounds of ATP-dependent interactions between DnaJ, DnaK and GrpE are required for fully efficient folding. Also involved, together with DnaK and GrpE, in the DNA replication of plasmids through activation of initiation proteins. The protein is Chaperone protein DnaJ of Streptococcus agalactiae serotype Ia (strain ATCC 27591 / A909 / CDC SS700).